Consider the following 553-residue polypeptide: Formate--tetrahydrofolate ligase (553 aa).

62–69 is a binding site for ATP; that stretch reads TPAGEGKS.

The protein belongs to the formate--tetrahydrofolate ligase family.

It catalyses the reaction (6S)-5,6,7,8-tetrahydrofolate + formate + ATP = (6R)-10-formyltetrahydrofolate + ADP + phosphate. It functions in the pathway one-carbon metabolism; tetrahydrofolate interconversion. The protein is Formate--tetrahydrofolate ligase of Limosilactobacillus reuteri subsp. reuteri (strain JCM 1112) (Lactobacillus reuteri).